The primary structure comprises 1235 residues: Major DNA-binding protein (1235 aa).

The interval 536–584 (GGLDGKGDDGVPGGGAGGGGGRDVSGGPSDGLGGGRGGGGGGDSGGMMG) is disordered. Gly residues predominate over residues 545–584 (GVPGGGAGGGGGRDVSGGPSDGLGGGRGGGGGGDSGGMMG). Positions 846–847 (FW) match the Required for filament formation motif. The segment covering 1214–1226 (GVGGSSGGGGGSG) has biased composition (gly residues). The tract at residues 1214–1235 (GVGGSSGGGGGSGLLPAKRSRL) is disordered. The segment at 1232–1235 (RSRL) is required for nuclear localization.

This sequence belongs to the herpesviridae major DNA-binding protein family. As to quaternary structure, homooligomers. Forms double-helical filaments necessary for the formation of replication compartments within the host nucleus. Interacts with the origin-binding protein. Interacts with the helicase primase complex; this interaction stimulates primer synthesis activity of the helicase-primase complex. Interacts with the DNA polymerase. Interacts with the alkaline exonuclease; this interaction increases its nuclease processivity.

It is found in the host nucleus. Plays several crucial roles in viral infection. Participates in the opening of the viral DNA origin to initiate replication by interacting with the origin-binding protein. May disrupt loops, hairpins and other secondary structures present on ssDNA to reduce and eliminate pausing of viral DNA polymerase at specific sites during elongation. Promotes viral DNA recombination by performing strand-transfer, characterized by the ability to transfer a DNA strand from a linear duplex to a complementary single-stranded DNA circle. Can also catalyze the renaturation of complementary single strands. Additionally, reorganizes the host cell nucleus, leading to the formation of prereplicative sites and replication compartments. This process is driven by the protein which can form double-helical filaments in the absence of DNA. The sequence is that of Major DNA-binding protein from Homo sapiens (Human).